Here is a 412-residue protein sequence, read N- to C-terminus: UV DNA damage endonuclease (412 aa).

Belongs to the uve1/UvsE family.

In terms of biological role, component in a DNA repair pathway. Removal of UV LIGHT damaged nucleotides. Recognizes pyrimidine dimers and cleave a phosphodiester bond immediately 5' to the lesion. The sequence is that of UV DNA damage endonuclease from Clostridium perfringens (strain 13 / Type A).